Here is a 138-residue protein sequence, read N- to C-terminus: Putative pre-16S rRNA nuclease (138 aa).

The protein belongs to the YqgF nuclease family.

It localises to the cytoplasm. Its function is as follows. Could be a nuclease involved in processing of the 5'-end of pre-16S rRNA. The sequence is that of Putative pre-16S rRNA nuclease from Cronobacter sakazakii (strain ATCC BAA-894) (Enterobacter sakazakii).